We begin with the raw amino-acid sequence, 392 residues long: Aryl-hydrocarbon-interacting protein-like 1 (392 aa).

The PPIase FKBP-type domain occupies 53-145; the sequence is RQVDQPMHII…DLDELQKEPQ (93 aa). TPR repeat units follow at residues 178 to 211, 230 to 263, and 264 to 297; these read VPVL…LRNL, NTLT…HPGI, and VKAY…EPSM. A disordered region spans residues 329 to 392; sequence QGATQPPAEP…PLSPGHSLQH (64 aa). Composition is skewed to pro residues over residues 335–346 and 355–366; these read PAEPPAQPPTAP and PADPPAEPPTAP.

Interacts with NUB1.

The protein resides in the cytoplasm. It localises to the nucleus. In terms of biological role, may be important in protein trafficking and/or protein folding and stabilization. The protein is Aryl-hydrocarbon-interacting protein-like 1 (AIPL1) of Macaca mulatta (Rhesus macaque).